The primary structure comprises 115 residues: UPF0235 protein CTA_0423 (115 aa).

The protein belongs to the UPF0235 family.

This is UPF0235 protein CTA_0423 from Chlamydia trachomatis serovar A (strain ATCC VR-571B / DSM 19440 / HAR-13).